Consider the following 323-residue polypeptide: Quinolinate synthase (323 aa).

Iminosuccinate contacts are provided by histidine 38 and serine 55. Cysteine 100 lines the [4Fe-4S] cluster pocket. Residues tyrosine 126–asparagine 128 and serine 143 each bind iminosuccinate. Cysteine 186 lines the [4Fe-4S] cluster pocket. Iminosuccinate-binding positions include histidine 212–glutamate 214 and threonine 229. Residue cysteine 279 participates in [4Fe-4S] cluster binding.

The protein belongs to the quinolinate synthase family. Type 2 subfamily. The cofactor is [4Fe-4S] cluster.

It localises to the cytoplasm. The catalysed reaction is iminosuccinate + dihydroxyacetone phosphate = quinolinate + phosphate + 2 H2O + H(+). It participates in cofactor biosynthesis; NAD(+) biosynthesis; quinolinate from iminoaspartate: step 1/1. Its function is as follows. Catalyzes the condensation of iminoaspartate with dihydroxyacetone phosphate to form quinolinate. The polypeptide is Quinolinate synthase (Gloeothece citriformis (strain PCC 7424) (Cyanothece sp. (strain PCC 7424))).